The following is a 234-amino-acid chain: Phosphoribosylaminoimidazole-succinocarboxamide synthase (234 aa).

The protein belongs to the SAICAR synthetase family.

It catalyses the reaction 5-amino-1-(5-phospho-D-ribosyl)imidazole-4-carboxylate + L-aspartate + ATP = (2S)-2-[5-amino-1-(5-phospho-beta-D-ribosyl)imidazole-4-carboxamido]succinate + ADP + phosphate + 2 H(+). Its pathway is purine metabolism; IMP biosynthesis via de novo pathway; 5-amino-1-(5-phospho-D-ribosyl)imidazole-4-carboxamide from 5-amino-1-(5-phospho-D-ribosyl)imidazole-4-carboxylate: step 1/2. The protein is Phosphoribosylaminoimidazole-succinocarboxamide synthase of Streptococcus agalactiae serotype V (strain ATCC BAA-611 / 2603 V/R).